Here is a 66-residue protein sequence, read N- to C-terminus: uncharacterized protein (66 aa).

The HTH cro/C1-type domain occupies V5–V59. A DNA-binding region (H-T-H motif) is located at residues Q16–K35.

This is an uncharacterized protein from Bacillus subtilis (strain 168).